We begin with the raw amino-acid sequence, 226 residues long: Cytochrome c biogenesis ATP-binding export protein CcmA (226 aa).

The ABC transporter domain maps to 19–226 (LRANDLAFSR…LGGAHALPPA (208 aa)). 51–58 (GPNGSGKS) is an ATP binding site.

Belongs to the ABC transporter superfamily. CcmA exporter (TC 3.A.1.107) family. As to quaternary structure, the complex is composed of two ATP-binding proteins (CcmA) and two transmembrane proteins (CcmB).

Its subcellular location is the cell inner membrane. The enzyme catalyses heme b(in) + ATP + H2O = heme b(out) + ADP + phosphate + H(+). Part of the ABC transporter complex CcmAB involved in the biogenesis of c-type cytochromes; once thought to export heme, this seems not to be the case, but its exact role is uncertain. Responsible for energy coupling to the transport system. In Cupriavidus pinatubonensis (strain JMP 134 / LMG 1197) (Cupriavidus necator (strain JMP 134)), this protein is Cytochrome c biogenesis ATP-binding export protein CcmA.